A 330-amino-acid polypeptide reads, in one-letter code: Aspartate--ammonia ligase (330 aa).

This sequence belongs to the class-II aminoacyl-tRNA synthetase family. AsnA subfamily.

It localises to the cytoplasm. The enzyme catalyses L-aspartate + NH4(+) + ATP = L-asparagine + AMP + diphosphate + H(+). It functions in the pathway amino-acid biosynthesis; L-asparagine biosynthesis; L-asparagine from L-aspartate (ammonia route): step 1/1. The protein is Aspartate--ammonia ligase of Escherichia coli (strain SMS-3-5 / SECEC).